The chain runs to 445 residues: Argininosuccinate synthase (445 aa).

ATP contacts are provided by residues 17-25 (AFSGGLDTS) and Ala-43. Tyr-99 contacts L-citrulline. Gly-129 and Thr-131 together coordinate ATP. Thr-131, Asn-135, and Asp-136 together coordinate L-aspartate. L-citrulline is bound at residue Asn-135. An ATP-binding site is contributed by Asp-136. Arg-139 and Ser-192 together coordinate L-citrulline. An ATP-binding site is contributed by Asp-194. Residues Thr-201, Glu-203, and Glu-280 each contribute to the L-citrulline site.

The protein belongs to the argininosuccinate synthase family. Type 2 subfamily. In terms of assembly, homotetramer.

The protein localises to the cytoplasm. It carries out the reaction L-citrulline + L-aspartate + ATP = 2-(N(omega)-L-arginino)succinate + AMP + diphosphate + H(+). Its pathway is amino-acid biosynthesis; L-arginine biosynthesis; L-arginine from L-ornithine and carbamoyl phosphate: step 2/3. The protein is Argininosuccinate synthase of Bordetella bronchiseptica (strain ATCC BAA-588 / NCTC 13252 / RB50) (Alcaligenes bronchisepticus).